The following is a 1023-amino-acid chain: Sodium/potassium-transporting ATPase subunit alpha-1 (1023 aa).

Residues 1–5 (MAFKV) constitute a propeptide that is removed on maturation. A compositionally biased stretch (basic and acidic residues) spans 1–11 (MAFKVGRDKYE). Residues 1 to 38 (MAFKVGRDKYEPAAVSEQGDKKGKKGKKDRDMDELKKE) are disordered. The Cytoplasmic portion of the chain corresponds to 6–87 (GRDKYEPAAV…NALTPPPTTP (82 aa)). Lys9 is modified (N6-acetyllysine). A Phosphotyrosine modification is found at Tyr10. Ser16 is subject to Phosphoserine; by PKC. Lys21 is subject to N6-acetyllysine. Positions 28-38 (KDRDMDELKKE) are enriched in basic and acidic residues. A phosphoserine mark is found at Ser40 and Ser47. The phosphoinositide-3 kinase binding stretch occupies residues 82–84 (PPP). The helical transmembrane segment at 88-108 (EWIKFCRQLFGGFSMLLWIGA) threads the bilayer. The Extracellular segment spans residues 109 to 131 (ILCFLAYSIQAATEEEPQNDNLY). The helical transmembrane segment at 132–152 (LGVVLSAVVIITGCFSYYQEA) threads the bilayer. Topologically, residues 153-288 (KSSKIMESFK…GGQTPIAAEI (136 aa)) are cytoplasmic. The segment at 216 to 235 (SSLTGESEPQTRSPDFTNEN) is disordered. Phosphoserine is present on Ser228. A Phosphotyrosine modification is found at Tyr260. Residues 289 to 308 (EHFIHIITGVAVFLGVSFFI) traverse the membrane as a helical segment. The Extracellular segment spans residues 309–320 (LSLILEYTWLEA). A helical membrane pass occupies residues 321-338 (VIFLIGIIVANVPEGLLA). Over 339-772 (TVTVCLTLTA…EEGRLIFDNL (434 aa)) the chain is Cytoplasmic. Asp376 (4-aspartylphosphate intermediate) is an active-site residue. Residues Ser452 and Ser484 each carry the phosphoserine modification. Lys487 provides a ligand contact to ATP. A Phosphotyrosine modification is found at Tyr542. A mediates interaction with SCN7A region spans residues 596–717 (RAAVPDAVGK…QGAIVAVTGD (122 aa)). Lys661 is subject to N6-succinyllysine. Phosphoserine is present on residues Ser668 and Ser675. The Mg(2+) site is built by Asp717 and Asp721. The chain crosses the membrane as a helical span at residues 773–792 (KKSIAYTLTSNIPEITPFLI). Over 793–802 (FIIANIPLPL) the chain is Extracellular. Residues 803-823 (GTVTILCIDLGTDMVPAISLA) form a helical membrane-spanning segment. At 824 to 843 (YEQAESDIMKRQPRNPKTDK) the chain is on the cytoplasmic side. A helical transmembrane segment spans residues 844 to 866 (LVNERLISTAYGQIGMIQALGGF). Residues 867 to 918 (FTYFVILAENGFLPLHLLGLRVDWDDRWINDVEDSYGQQWTYEQRKIVEFTC) are Extracellular-facing. A helical transmembrane segment spans residues 919–938 (HTAFFVSIVVVQWADLVICK). The Cytoplasmic portion of the chain corresponds to 939–951 (TRRNSVFQQGMKN). At Ser943 the chain carries Phosphoserine; by PKA. A helical membrane pass occupies residues 952–970 (KILIFGLFEETALAAFLSY). Residues 971-985 (CPGMGVALRMYPLKP) lie on the Extracellular side of the membrane. A helical membrane pass occupies residues 986–1006 (TWWFCAFPYSLLIFVYDEVRK). Residues 1007 to 1023 (LIIRRRPGGWVEKETYY) lie on the Cytoplasmic side of the membrane.

Belongs to the cation transport ATPase (P-type) (TC 3.A.3) family. Type IIC subfamily. As to quaternary structure, the sodium/potassium-transporting ATPase is composed of a catalytic alpha subunit, an auxiliary non-catalytic beta subunit and an additional regulatory subunit. Interacts with regulatory subunit FXYD1. Interacts with regulatory subunit FXYD3. Interacts with SIK1. Interacts with SLC35G1 and STIM1. Interacts with CLN3; this interaction regulates the sodium/potassium-transporting ATPase complex localization at the plasma membrane. Interacts with SCN7A; activates ATP1A1 P-type sodium:potassium-exchanging transporter activity which indirectly signals to nearby neurons to regulate sodium homeostasis. Post-translationally, phosphorylation on Tyr-10 modulates pumping activity. Phosphorylation of Ser-943 by PKA modulates the response of ATP1A1 to PKC. Dephosphorylation by protein phosphatase 2A (PP2A) following increases in intracellular sodium, leading to increase catalytic activity.

It is found in the cell membrane. The protein resides in the basolateral cell membrane. Its subcellular location is the sarcolemma. It localises to the cell projection. The protein localises to the axon. It is found in the melanosome. It catalyses the reaction K(+)(out) + Na(+)(in) + ATP + H2O = K(+)(in) + Na(+)(out) + ADP + phosphate + H(+). This is the catalytic component of the active enzyme, which catalyzes the hydrolysis of ATP coupled with the exchange of sodium and potassium ions across the plasma membrane. This action creates the electrochemical gradient of sodium and potassium ions, providing the energy for active transport of various nutrients. Could also be part of an osmosensory signaling pathway that senses body-fluid sodium levels and controls salt intake behavior as well as voluntary water intake to regulate sodium homeostasis. In Pongo abelii (Sumatran orangutan), this protein is Sodium/potassium-transporting ATPase subunit alpha-1 (ATP1A1).